Here is a 260-residue protein sequence, read N- to C-terminus: Triosephosphate isomerase (260 aa).

Substrate is bound at residue 11–13 (NWK). The active-site Electrophile is His-103. Catalysis depends on Glu-175, which acts as the Proton acceptor. Residues Gly-181, Ser-220, and 241–242 (GG) each bind substrate.

This sequence belongs to the triosephosphate isomerase family. Homodimer.

It localises to the cytoplasm. The enzyme catalyses D-glyceraldehyde 3-phosphate = dihydroxyacetone phosphate. It functions in the pathway carbohydrate biosynthesis; gluconeogenesis. It participates in carbohydrate degradation; glycolysis; D-glyceraldehyde 3-phosphate from glycerone phosphate: step 1/1. Its function is as follows. Involved in the gluconeogenesis. Catalyzes stereospecifically the conversion of dihydroxyacetone phosphate (DHAP) to D-glyceraldehyde-3-phosphate (G3P). This chain is Triosephosphate isomerase, found in Shewanella sediminis (strain HAW-EB3).